The sequence spans 5538 residues: Leashin (5538 aa).

Residues 1–10 (MFRALMGGGR) are compositionally biased toward gly residues. 22 disordered regions span residues 1–270 (MFRA…SSMG), 286–315 (EVDPAPGRPDRPTAGTTSEPPKPSNTTFGI), 331–365 (LPLPASPTSPPEPVPTTAPYAPPVTSSTTKPPHTH), 510–555 (SRDA…KKSS), 596–712 (TESV…DISQ), 800–901 (AATS…FPTG), 913–944 (ALASTQDRDSRLPRQHASSSSGSLQHVAPVPT), 1027–1145 (NRPH…KDSF), 1164–1297 (VLSG…GYRD), 1310–1398 (PTPP…RYVS), 1432–1993 (EDPT…TSVE), 2067–2146 (SELL…VNAF), 2165–2207 (NRLS…SPPA), 2233–3065 (PEAA…SQPI), 3077–3894 (MAEE…EIVS), 3910–4034 (EEKA…DTGL), 4072–4128 (KFKQ…EEPL), 4238–4421 (EAAL…SNQA), 4442–4463 (PRPLEVEPAASEVYQGATDEND), 4509–4698 (LRRQ…TSNT), 4733–4850 (KTDG…VEQA), and 4910–5052 (ALTV…RHRR). Residues 1–1100 (MFRALMGGGR…RASGVQLIDR (1100 aa)) form a woronin bodies-binding region region. Residues 14–23 (SRSTTSSSKS) are compositionally biased toward low complexity. Basic and acidic residues-rich tracts occupy residues 42–51 (SRGDDRDRGL) and 89–167 (VEHD…ERSR). Residues 299–313 (AGTTSEPPKPSNTTF) are compositionally biased toward polar residues. Residues 334 to 352 (PASPTSPPEPVPTTAPYAP) are compositionally biased toward pro residues. The span at 514 to 523 (PRKHHYRQRR) shows a compositional bias: basic residues. Residues 598-607 (SVSTARRSQT) show a composition bias toward polar residues. The span at 639-655 (HRSRSRSHSSSRNRRHS) shows a compositional bias: basic residues. A compositionally biased stretch (low complexity) spans 660–674 (AAVGAAVGSGAIALA). The span at 682 to 698 (SRSRSRSRFPRKSKGRK) shows a compositional bias: basic residues. Basic and acidic residues predominate over residues 809-825 (RAGEILVAKETRSRHSD). Composition is skewed to low complexity over residues 842–851 (GDQSSSSVSS) and 862–880 (GSDESQSSDSGTSKWGWRW). Residues 881 to 891 (GSKKNKKKKRA) show a composition bias toward basic residues. Composition is skewed to basic and acidic residues over residues 1068–1091 (LTKEQADKERRMDRLEQLKRDAER), 1098–1145 (IDRD…KDSF), 1178–1198 (SQRRHEERRQQRRAERRRGSE), 1207–1226 (SKSERAQETTDYLPEERQPE), 1356–1365 (WGEHKTHEYE), 1375–1387 (SVDHETTREREQP), 1447–1462 (GRVEYRDPWVETESKS), and 1478–1488 (EEKAPSSRVIE). Over residues 1506–1516 (QESSEPQTRTS) the composition is skewed to low complexity. Basic and acidic residues-rich tracts occupy residues 1521–1536 (VIDRLSEKQDERDGSR), 1549–1559 (GKERDESELRA), and 1572–1594 (EELRSDPKRDVDSRDDGDVDRRS). The span at 1639–1648 (KKKRRKRRSK) shows a compositional bias: basic residues. Composition is skewed to basic and acidic residues over residues 1672-1686 (EKLKSMDDKDKEKKA), 1700-1773 (EPVD…QRRE), and 1788-1800 (KSGEYEKDRKLSE). Composition is skewed to low complexity over residues 1867–1876 (PAPRSRSRPA) and 1889–1898 (SQSSRRSSIL). The span at 1950-1975 (KNSREMRPLWLVERHGPGHGEHKLEE) shows a compositional bias: basic and acidic residues. Polar residues-rich tracts occupy residues 1984 to 1993 (KTSSANTSVE) and 2121 to 2130 (TPQNNVTAAS). Composition is skewed to basic and acidic residues over residues 2187–2196 (DADRTHKPIA), 2269–2279 (VPRDDKRRDSV), and 2307–2320 (GENKELPSEAKNEN). Residues 2321–2331 (ANDNSQAQTEQ) show a composition bias toward polar residues. Over residues 2344 to 2355 (AKKKKKKNKKKR) the composition is skewed to basic residues. Over residues 2358–2370 (MDSNTQEPTTPVD) the composition is skewed to polar residues. The span at 2427–2441 (DVEKAIEAPDVRKEL) shows a compositional bias: basic and acidic residues. Positions 2449–2461 (APEDTPAEPTAET) are enriched in low complexity. Basic residues predominate over residues 2473-2484 (KKSKKKKKKKNK). A compositionally biased stretch (polar residues) spans 2494–2525 (DPASTETPEASAANSQVVAAEQVESTLETTQP). Composition is skewed to basic and acidic residues over residues 2580-2590 (NQAKELPHPEE), 2647-2661 (PEDKNGEAEQADLKS), and 2677-2691 (ALDKELSEISERPAE). Residues 2719-2734 (EEPTPTAAELETPLSR) show a composition bias toward low complexity. The span at 2735–2747 (KNSKKNKKKNKRK) shows a compositional bias: basic residues. The span at 2796-2812 (DENKGESRDVQAVKEET) shows a compositional bias: basic and acidic residues. A compositionally biased stretch (basic residues) spans 2874-2884 (KKKAKKKKNRK). The segment covering 2885–2894 (TANVSESQPE) has biased composition (polar residues). 2 stretches are compositionally biased toward basic residues: residues 3003-3013 (KKSKKNKKKKQ) and 3089-3100 (KKTKKEKKKKRQ). Residues 3145–3172 (AIEHAEAAAEHSQEQPNKDVTLHADHSP) show a composition bias toward basic and acidic residues. The segment covering 3248–3268 (PAMEGGAAAEELVAVEPDVLE) has biased composition (low complexity). A compositionally biased stretch (polar residues) spans 3293–3303 (ELVNAETTQKT). Positions 3329–3341 (SKKKDKKKKKKRQ) are enriched in basic residues. The span at 3347-3367 (DEQRSSTKEEPTAEFSSDHVP) shows a compositional bias: basic and acidic residues. 2 stretches are compositionally biased toward low complexity: residues 3397 to 3409 (TQTAAEPTPSSAS) and 3422 to 3435 (ESTQEPAAEEAQTA). Residues 3436 to 3450 (KSKKKAKKDKKKRKS) are compositionally biased toward basic residues. Positions 3480-3495 (EGPKPGDKPTSPKDSS) are enriched in basic and acidic residues. A compositionally biased stretch (low complexity) spans 3547–3564 (EEQAVVEETVAPPVVDEA). 2 stretches are compositionally biased toward polar residues: residues 3565–3580 (SQLQEQKVSSETLWSE) and 3604–3613 (VSPSLENNEG). Composition is skewed to basic residues over residues 3642 to 3652 (KSKKNKKKKKR) and 3716 to 3730 (KAKKKAKKKDKKRQS). The span at 3768-3787 (TFSQETSETISTEAKSSEPS) shows a compositional bias: polar residues. Positions 3800–3819 (KENQSHDTEPHGGNDKDLTW) are enriched in basic and acidic residues. The segment covering 3823–3837 (MVSSQVEQQQGTPSD) has biased composition (polar residues). Residues 3876–3893 (DRLERSGEEGTRVKKEIV) show a composition bias toward basic and acidic residues. Polar residues-rich tracts occupy residues 3915–3925 (ISSQGEDTIQV) and 3965–3980 (KDQFTSIEVNDPSQSK). Residues 4010–4020 (TSQDDSVDAVQ) are compositionally biased toward acidic residues. Residues 4111 to 4123 (ESRENKFKEKQLA) show a composition bias toward basic and acidic residues. Residues 4244-4255 (KNSKKKSKKAKK) are compositionally biased toward basic residues. Residues 4328–4345 (LGQTPNMDNQTDDVQSTE) show a composition bias toward polar residues. A compositionally biased stretch (basic residues) spans 4378–4391 (KLSKKDRRKAKKKS). A compositionally biased stretch (basic and acidic residues) spans 4392-4406 (AKDAIEPSDEPELRN). Positions 4495–5538 (AIAEFDETAI…SSTMDISNVI (1044 aa)) are septal pore-binding region. A compositionally biased stretch (polar residues) spans 4554–4570 (TEQSAGLQAKSVSSQGA). 2 stretches are compositionally biased toward basic and acidic residues: residues 4574–4591 (IQDDMQHPENRLARDQTK) and 4660–4673 (EESHLQSQQDEKGP). Residues 4940 to 4954 (SSVSSVKSVQSTHSV) are compositionally biased toward low complexity. Positions 4966–4988 (RNTSGDLRAASQAQESHGTQPHA) are enriched in polar residues. Pro residues predominate over residues 4989–4998 (TPQPPQPPPS). The stretch at 5050–5223 (HRRSMQHLQE…QQQIAASLHD (174 aa)) forms a coiled coil.

Binds directly or indirectly to the Woronin body major protein hexA.

The protein localises to the cell septum. In terms of biological role, acts as the tether and is essential for anchoring of Woronin bodies at the septal pore. In damaged hyphae, Woronin bodies occlude septal pores in order to separate intact from damaged compartments. The sequence is that of Leashin from Aspergillus fumigatus (strain ATCC MYA-4609 / CBS 101355 / FGSC A1100 / Af293) (Neosartorya fumigata).